Here is an 865-residue protein sequence, read N- to C-terminus: AdoMet-dependent rRNA methyltransferase SPB1 (865 aa).

S-adenosyl-L-methionine is bound by residues G56, W58, D76, D92, and D117. K157 functions as the Proton acceptor in the catalytic mechanism. Coiled-coil stretches lie at residues 358–400 and 462–492; these read ESMD…VRMQ and GETD…RKAA. 2 disordered regions span residues 370-396 and 443-676; these read LEKL…QKDI and VVAS…TKDG. Positions 386–396 are enriched in basic and acidic residues; the sequence is RKENERKQKDI. Residues 463-483 show a composition bias toward acidic residues; the sequence is ETDDESDEELDRLETELDDMY. The span at 484–497 shows a compositional bias: basic and acidic residues; the sequence is DQFRERKAASDAKY. Positions 526–545 are enriched in acidic residues; that stretch reads ISDDSELEEESSGDSDDEDD. The span at 556–566 shows a compositional bias: polar residues; sequence LDTTPSDNSGL. Positions 600 to 609 are enriched in acidic residues; that stretch reads GEDEDADMED. 2 stretches are compositionally biased toward basic and acidic residues: residues 610-627 and 659-676; these read TVSK…ADKK and KSGK…TKDG. Positions 762–789 form a coiled coil; sequence REAKGRKKMKAAQRLEKLKKKSDLLVNE.

It belongs to the class I-like SAM-binding methyltransferase superfamily. RNA methyltransferase RlmE family. SPB1 subfamily. As to quaternary structure, component of the nucleolar and nucleoplasmic pre-60S ribosomal particle.

It is found in the nucleus. It localises to the nucleolus. It carries out the reaction a ribonucleotide in rRNA + S-adenosyl-L-methionine = a 2'-O-methylribonucleotide in rRNA + S-adenosyl-L-homocysteine + H(+). In terms of biological role, required for proper assembly of pre-ribosomal particles during the biogenesis of the 60S ribosomal subunit. This chain is AdoMet-dependent rRNA methyltransferase SPB1, found in Pyricularia oryzae (strain 70-15 / ATCC MYA-4617 / FGSC 8958) (Rice blast fungus).